Reading from the N-terminus, the 388-residue chain is Oxytocin receptor (388 aa).

Over 1-38 (MEGTPAANWSIELDLGSGVPPGAEGNLTAGPPRRNEAL) the chain is Extracellular. 2 N-linked (GlcNAc...) asparagine glycosylation sites follow: Asn-8 and Asn-26. The chain crosses the membrane as a helical span at residues 39-63 (ARVEVAVLCLILFLALSGNACVLLA). The Cytoplasmic segment spans residues 64–74 (LRTTRHKHSRL). A helical transmembrane segment spans residues 75-97 (FFFMKHLSIADLVVAVFQVLPQL). Over 98-113 (LWDITFRFYGPDLLCR) the chain is Extracellular. The cysteines at positions 112 and 187 are disulfide-linked. A helical membrane pass occupies residues 114 to 135 (LVKYLQVVGMFASTYLLLLMSL). The Cytoplasmic portion of the chain corresponds to 136 to 154 (DRCLAICQPLRSLRRRTDR). Residues 155–175 (LAVLATWLGCLVASVPQVHIF) form a helical membrane-spanning segment. At 176–202 (SLREVADGVFDCWAVFIQPWGPKAYVT) the chain is on the extracellular side. Residues 203–225 (WITLAVYIVPVIVLAACYGLISF) form a helical membrane-spanning segment. Residues 226–274 (KIWQNLRLKTAAAAAAAEGSDAAGGAGRAALARVSSVKLISKAKIRTVK) are Cytoplasmic-facing. The helical transmembrane segment at 275-293 (MTFIIVLAFIVCWTPFFFV) threads the bilayer. The Extracellular portion of the chain corresponds to 294-308 (QMWSVWDVNAPKEAS). A helical transmembrane segment spans residues 309–331 (AFIIAMLLASLNSCCNPWIYMLF). At 332 to 388 (TGHLFHELVQRFLCCSARYLKGSRPGETSISKKSNSSTFVLSRRSSSQRSCSQPSSA) the chain is on the cytoplasmic side. The segment at 354–388 (SRPGETSISKKSNSSTFVLSRRSSSQRSCSQPSSA) is disordered. A phosphoserine mark is found at Ser-365 and Ser-367. A compositionally biased stretch (low complexity) spans 365 to 388 (SNSSTFVLSRRSSSQRSCSQPSSA).

It belongs to the G-protein coupled receptor 1 family. Vasopressin/oxytocin receptor subfamily.

The protein resides in the cell membrane. Receptor for oxytocin. The activity of this receptor is mediated by G proteins which activate a phosphatidylinositol-calcium second messenger system. The sequence is that of Oxytocin receptor (Oxtr) from Mus musculus (Mouse).